Consider the following 542-residue polypeptide: Chaperonin GroEL (542 aa).

Residues 29–32, 86–90, G413, 476–478, and D492 contribute to the ATP site; these read TLGP, DGTTT, and NAA.

The protein belongs to the chaperonin (HSP60) family. Forms a cylinder of 14 subunits composed of two heptameric rings stacked back-to-back. Interacts with the co-chaperonin GroES.

The protein localises to the cytoplasm. It carries out the reaction ATP + H2O + a folded polypeptide = ADP + phosphate + an unfolded polypeptide.. Its function is as follows. Together with its co-chaperonin GroES, plays an essential role in assisting protein folding. The GroEL-GroES system forms a nano-cage that allows encapsulation of the non-native substrate proteins and provides a physical environment optimized to promote and accelerate protein folding. The polypeptide is Chaperonin GroEL (Bacillus cytotoxicus (strain DSM 22905 / CIP 110041 / 391-98 / NVH 391-98)).